The following is an 894-amino-acid chain: Protein SEY1 homolog (894 aa).

Low complexity-rich tracts occupy residues 1–10 (MSEEITTNQT) and 36–48 (VQEQ…QEQQ). The segment at 1–97 (MSEEITTNQT…QKQQTQEQEH (97 aa)) is disordered. The Cytoplasmic portion of the chain corresponds to 1–800 (MSEEITTNQT…EQNRLTSGGG (800 aa)). Residues 21-60 (RLSNENIKQEDEEQQVQEQQEQQQQEQQEQIDDQDTQQQE) adopt a coiled-coil conformation. A compositionally biased stretch (acidic residues) spans 49 to 65 (EQIDDQDTQQQEDEFVV). Low complexity predominate over residues 78 to 93 (TPTLQETPQQQKQQTQ). The GB1/RHD3-type G domain maps to 138-361 (GFDYSVISIL…ADSFIPKRKY (224 aa)). A GTP-binding site is contributed by 148 to 155 (GPQSSGKS). A helical transmembrane segment spans residues 801–821 (VPGYMIILLCVLGFNEFISII). At 822–824 (SSP) the chain is on the lumenal side. Residues 825–845 (LLLLLTILLGGVGFVLFKLGL) form a helical membrane-spanning segment. Residues 846–894 (AGPFIDYSSQILVHFISKVKDIVLHVEQLQEQNHNNNNNNNNTPKQKRE) lie on the Cytoplasmic side of the membrane.

Belongs to the TRAFAC class dynamin-like GTPase superfamily. GB1/RHD3 GTPase family. RHD3 subfamily.

It is found in the endoplasmic reticulum membrane. Probable GTP-binding protein that may be involved in cell development. This is Protein SEY1 homolog from Dictyostelium discoideum (Social amoeba).